We begin with the raw amino-acid sequence, 290 residues long: Purine nucleoside phosphorylase (290 aa).

A phosphate-binding site is contributed by 68 to 69 (RN). Methionine 204 serves as a coordination point for substrate. Phosphate is bound at residue threonine 205.

This sequence belongs to the PNP/MTAP phosphorylase family. MTAP subfamily. In terms of assembly, homotrimer.

The protein resides in the cytoplasm. Its subcellular location is the nucleus. The catalysed reaction is a purine D-ribonucleoside + phosphate = a purine nucleobase + alpha-D-ribose 1-phosphate. It participates in purine metabolism; purine nucleoside salvage. In terms of biological role, purine nucleoside phosphorylase involved in purine salvage. This Drosophila melanogaster (Fruit fly) protein is Purine nucleoside phosphorylase.